The primary structure comprises 1460 residues: Probable outer membrane protein PmpC (1460 aa).

Positions 1 to 20 (MKFLSATAVFAAALPSITSA) are cleaved as a signal peptide. Disordered stretches follow at residues 21–48 (SSVE…FTEI), 92–212 (SEEN…PDKD), 279–372 (TPPA…ESGS), 455–549 (TPEE…DSSI), and 993–1021 (VDTS…TAQA). Over residues 34 to 44 (SSRTGSSSSQS) the composition is skewed to low complexity. The span at 97 to 114 (QASFQDSAQNQTENASEG) shows a compositional bias: polar residues. Residues 115–137 (NSPNSENTNQSSTTETESITTDE) are compositionally biased toward low complexity. Residues 138-155 (QVQNDNESAASVPTTVET) show a composition bias toward polar residues. A compositionally biased stretch (low complexity) spans 290–327 (NDPSGSNGNDGSDDSNSSGNTDSNESNPNNSASNNTGS). The segment covering 328 to 358 (ENELSSSTPSAQLPNPATPFLSSVSTNSQPI) has biased composition (polar residues). The segment covering 461–471 (LKSSQLNNQNP) has biased composition (low complexity). The span at 487–501 (SLETSPITNQDSASS) shows a compositional bias: polar residues. Composition is skewed to low complexity over residues 504-548 (AIFR…SDSS) and 995-1018 (TSTN…STPT). The 294-residue stretch at 1167-1460 (DEVAYNNLWI…MINCGARMTF (294 aa)) folds into the Autotransporter domain.

The protein belongs to the PMP outer membrane protein family.

The protein localises to the secreted. The protein resides in the cell wall. It is found in the cell outer membrane. In Chlamydia muridarum (strain MoPn / Nigg), this protein is Probable outer membrane protein PmpC (pmpC).